The sequence spans 194 residues: Thymidylate kinase (194 aa).

Residue 7 to 14 (GIDTAGKS) coordinates ATP.

Belongs to the thymidylate kinase family.

The catalysed reaction is dTMP + ATP = dTDP + ADP. Phosphorylation of dTMP to form dTDP in both de novo and salvage pathways of dTTP synthesis. The sequence is that of Thymidylate kinase from Nautilia profundicola (strain ATCC BAA-1463 / DSM 18972 / AmH).